The following is a 515-amino-acid chain: RNA-binding region-containing protein 3 (515 aa).

Positions M1–D26 are disordered. The residue at position 21 (S21) is a Phosphoserine. The RRM 1 domain maps to R27–E102. 3 disordered regions span residues H107–E133, L215–R254, and E337–N369. S108 is subject to Phosphoserine. Positions A115–E133 are enriched in basic and acidic residues. Over residues P218–P230 the composition is skewed to pro residues. Residues E337–D348 show a composition bias toward basic and acidic residues. S349 is modified (phosphoserine). One can recognise an RRM 2 domain in the interval C419 to S502.

In terms of assembly, component of the U11/U12 snRNPs that are part of the U12-type spliceosome. Found in a complex with m(7)G-capped U12 snRNA. Interacts with PDCD7.

It localises to the nucleus. In terms of biological role, participates in pre-mRNA U12-dependent splicing, performed by the minor spliceosome which removes U12-type introns. U12-type introns comprises less than 1% of all non-coding sequences. Binds to the 3'-stem-loop of m(7)G-capped U12 snRNA. This Rattus norvegicus (Rat) protein is RNA-binding region-containing protein 3 (Rnpc3).